Here is a 660-residue protein sequence, read N- to C-terminus: Bifunctional polymyxin resistance protein ArnA (660 aa).

A formyltransferase ArnAFT region spans residues 1–304 (MKTVVFAYHD…TLGLVQGSRL (304 aa)). 86–88 (HLI) serves as a coordination point for (6R)-10-formyltetrahydrofolate. The Proton donor; for formyltransferase activity role is filled by His-104. Residues Arg-114 and 136 to 140 (VKRAD) contribute to the (6R)-10-formyltetrahydrofolate site. Residues 314–660 (RRTRVLILGV…RTVDLTDKPL (347 aa)) form a dehydrogenase ArnADH region. Residues Asp-347 and 368–369 (DI) contribute to the NAD(+) site. UDP-alpha-D-glucuronate contacts are provided by residues Ala-393, Tyr-398, and 432 to 433 (TS). Glu-434 functions as the Proton acceptor; for decarboxylase activity in the catalytic mechanism. Residues Arg-460, Asn-492, 526 to 535 (KLIDGGKQKR), and Tyr-613 each bind UDP-alpha-D-glucuronate. The active-site Proton donor; for decarboxylase activity is the Arg-619.

This sequence in the N-terminal section; belongs to the Fmt family. UDP-L-Ara4N formyltransferase subfamily. It in the C-terminal section; belongs to the NAD(P)-dependent epimerase/dehydratase family. UDP-glucuronic acid decarboxylase subfamily. Homohexamer, formed by a dimer of trimers.

The enzyme catalyses UDP-alpha-D-glucuronate + NAD(+) = UDP-beta-L-threo-pentopyranos-4-ulose + CO2 + NADH. The catalysed reaction is UDP-4-amino-4-deoxy-beta-L-arabinose + (6R)-10-formyltetrahydrofolate = UDP-4-deoxy-4-formamido-beta-L-arabinose + (6S)-5,6,7,8-tetrahydrofolate + H(+). Its pathway is nucleotide-sugar biosynthesis; UDP-4-deoxy-4-formamido-beta-L-arabinose biosynthesis; UDP-4-deoxy-4-formamido-beta-L-arabinose from UDP-alpha-D-glucuronate: step 1/3. The protein operates within nucleotide-sugar biosynthesis; UDP-4-deoxy-4-formamido-beta-L-arabinose biosynthesis; UDP-4-deoxy-4-formamido-beta-L-arabinose from UDP-alpha-D-glucuronate: step 3/3. It participates in bacterial outer membrane biogenesis; lipopolysaccharide biosynthesis. In terms of biological role, bifunctional enzyme that catalyzes the oxidative decarboxylation of UDP-glucuronic acid (UDP-GlcUA) to UDP-4-keto-arabinose (UDP-Ara4O) and the addition of a formyl group to UDP-4-amino-4-deoxy-L-arabinose (UDP-L-Ara4N) to form UDP-L-4-formamido-arabinose (UDP-L-Ara4FN). The modified arabinose is attached to lipid A and is required for resistance to polymyxin and cationic antimicrobial peptides. The polypeptide is Bifunctional polymyxin resistance protein ArnA (Escherichia coli O6:K15:H31 (strain 536 / UPEC)).